We begin with the raw amino-acid sequence, 556 residues long: Urocanate hydratase (556 aa).

NAD(+) contacts are provided by residues 52-53 (GG), glutamine 130, 176-178 (GMG), glutamate 196, arginine 201, 242-243 (NA), 263-267 (QTSAH), 273-274 (YL), and tyrosine 322. Cysteine 410 is an active-site residue. Glycine 492 provides a ligand contact to NAD(+).

This sequence belongs to the urocanase family. NAD(+) is required as a cofactor.

The protein resides in the cytoplasm. It carries out the reaction 4-imidazolone-5-propanoate = trans-urocanate + H2O. It functions in the pathway amino-acid degradation; L-histidine degradation into L-glutamate; N-formimidoyl-L-glutamate from L-histidine: step 2/3. In terms of biological role, catalyzes the conversion of urocanate to 4-imidazolone-5-propionate. The protein is Urocanate hydratase of Shewanella oneidensis (strain ATCC 700550 / JCM 31522 / CIP 106686 / LMG 19005 / NCIMB 14063 / MR-1).